The primary structure comprises 289 residues: E3 ubiquitin-protein ligase MARCHF5 (289 aa).

The RING-CH-type zinc-finger motif lies at 4–73; that stretch reads VDEPPEKHCW…PQCGTEYRIV (70 aa). Residues Cys12, Cys15, Cys31, Cys33, His41, Cys44, Cys63, and Cys66 each coordinate Zn(2+). The next 4 helical transmembrane spans lie at 97 to 117, 137 to 157, 202 to 222, and 236 to 256; these read FAAA…YGAV, PLFL…GKMI, LSVS…NLVG, and TILG…YFKQ.

The protein resides in the mitochondrion outer membrane. It localises to the endoplasmic reticulum membrane. The enzyme catalyses S-ubiquitinyl-[E2 ubiquitin-conjugating enzyme]-L-cysteine + [acceptor protein]-L-lysine = [E2 ubiquitin-conjugating enzyme]-L-cysteine + N(6)-ubiquitinyl-[acceptor protein]-L-lysine.. It participates in protein modification; protein ubiquitination. In terms of biological role, mitochondrial E3 ubiquitin-protein ligase that plays a crucial role in the control of mitochondrial morphology by acting as a positive regulator of mitochondrial fission. May play a role in the prevention of cell senescence acting as a regulator of mitochondrial quality control. This is E3 ubiquitin-protein ligase MARCHF5 (marchf5) from Danio rerio (Zebrafish).